A 199-amino-acid chain; its full sequence is Thymidine kinase (199 aa).

ATP is bound by residues glycine 23–threonine 30 and aspartate 95–glutamine 98. The active-site Proton acceptor is the glutamate 96. 4 residues coordinate Zn(2+): cysteine 152, cysteine 155, cysteine 184, and cysteine 187.

This sequence belongs to the thymidine kinase family. In terms of assembly, homotetramer.

The protein localises to the cytoplasm. The enzyme catalyses thymidine + ATP = dTMP + ADP + H(+). The protein is Thymidine kinase of Bacteroides thetaiotaomicron (strain ATCC 29148 / DSM 2079 / JCM 5827 / CCUG 10774 / NCTC 10582 / VPI-5482 / E50).